The primary structure comprises 219 residues: Adenylate kinase (219 aa).

ATP is bound at residue Gly-10–Thr-15. The interval Ser-30 to Val-59 is NMP. Residues Thr-31, Arg-36, Glu-57–Val-59, Gly-85–Arg-88, and Gln-92 each bind AMP. The interval Gly-122–Asp-159 is LID. ATP-binding positions include Arg-123 and Val-132 to Tyr-133. The interval Ser-129–Pro-152 is disordered. The segment covering Tyr-133–Pro-152 has biased composition (basic and acidic residues). Residues Arg-156 and Arg-167 each coordinate AMP. Gly-203 serves as a coordination point for ATP.

The protein belongs to the adenylate kinase family. As to quaternary structure, monomer.

It is found in the cytoplasm. It catalyses the reaction AMP + ATP = 2 ADP. It functions in the pathway purine metabolism; AMP biosynthesis via salvage pathway; AMP from ADP: step 1/1. Functionally, catalyzes the reversible transfer of the terminal phosphate group between ATP and AMP. Plays an important role in cellular energy homeostasis and in adenine nucleotide metabolism. This Alkalilimnicola ehrlichii (strain ATCC BAA-1101 / DSM 17681 / MLHE-1) protein is Adenylate kinase.